Here is an 803-residue protein sequence, read N- to C-terminus: MTFNHKKMEPKWQQYWSEHNTFKTTEDKDKENFYALDMFPYPSGAGLHVGHPEGYTATDILSRMKRMQGKNVLHPIGWDAFGLPAEQYAIDTGNDPEEFTALNIANFTRQIKSLGFSYDWDREINTTDPEYYKWTQWIFEKLYENGLAYEAEIAVNWCPALGTVLANEEVIDGKSERGGFPVFRKPMRQWMLKITAYADRLLDDLELVDWPENIKDMQRNWIGRSEGAEVTFKIKDSDETFNVFTTRPDTLFGATYTVFAPEHELIEKITTPEQKEAVEAYKKQVELKSELERTDLAKDKTGVFTGAYAINPINGEEVPIWIADYVLIQYGTGAIMAVPAHDERDFEFAQQFGLNIRPVLEGGDVTKEAFTGDGPHINSDFLNGLAKAEAITAAIDWLEKEGIGSRKITYRLRDWLFSRQRYWGEPIPVIHWEDGETTLVPEDELPLLLPKATEIKPSGTGESPLANLHDWVNVTDENGRKGRRETNTMPQWAGSSWYFLRYIDPKNSEAIADKEKLAEWLPVDVYIGGAEHAVLHLLYARFWHKFLYDIGVVPTKEPFQKLFNQGMILGENNEKMSKSRGNVVNPDEVVEKYGADTLRLYEMFMGPLEASIAWNENGLEGARKFLDRIWRLLVTEEGTLAEKVTTDANANLEKAYHHMVKTVTNHYENLRFNTGISQLMIFINEAYKRDTIPKQYVEGFVQLLSPIAPHLAEELWEILGHTETISYVAWPTYDETKLVEDEVEIVLQVNGKVKSKITVAKSLGKEELEKLAHEDDKIKENIDGKTIRKVIVVPGKLVNIVAN.

The 'HIGH' region signature appears at P40–H51. Residues K575 to S579 carry the 'KMSKS' region motif. An ATP-binding site is contributed by K578.

This sequence belongs to the class-I aminoacyl-tRNA synthetase family.

It localises to the cytoplasm. It carries out the reaction tRNA(Leu) + L-leucine + ATP = L-leucyl-tRNA(Leu) + AMP + diphosphate. This Listeria innocua serovar 6a (strain ATCC BAA-680 / CLIP 11262) protein is Leucine--tRNA ligase.